The chain runs to 118 residues: Vesicle-associated membrane protein 1 (118 aa).

A compositionally biased stretch (low complexity) spans 1–15 (MSAPAQPPTEGAEGA). The disordered stretch occupies residues 1 to 36 (MSAPAQPPTEGAEGAAPGGGPPGPPPNMTSNRRLQQ). The Cytoplasmic portion of the chain corresponds to 1-96 (MSAPAQPPTE…KRKYWWKNCK (96 aa)). One can recognise a v-SNARE coiled-coil homology domain in the interval 33–93 (RLQQTQAQVE…AKLKRKYWWK (61 aa)). Position 63 is a phosphoserine (Ser-63). The chain crosses the membrane as a helical; Anchor for type IV membrane protein span at residues 97-116 (MMIMLGAICAIIVVVIVIYF). At 117–118 (FA) the chain is on the vesicular side.

It belongs to the synaptobrevin family. As to quaternary structure, interacts with VAPA and VAPB.

The protein localises to the cytoplasmic vesicle. It is found in the secretory vesicle. It localises to the synaptic vesicle membrane. The protein resides in the synapse. Its subcellular location is the synaptosome. The protein localises to the cytoplasmic vesicle membrane. In terms of biological role, involved in the targeting and/or fusion of transport vesicles to their target membrane. The polypeptide is Vesicle-associated membrane protein 1 (VAMP1) (Bos taurus (Bovine)).